The sequence spans 267 residues: Phosphate import ATP-binding protein PstB 1 (267 aa).

The region spanning 21–262 (LETKDLHVYY…AALQSTSDYV (242 aa)) is the ABC transporter domain. ATP is bound at residue 53 to 60 (GPSGCGKS).

Belongs to the ABC transporter superfamily. Phosphate importer (TC 3.A.1.7) family. As to quaternary structure, the complex is composed of two ATP-binding proteins (PstB), two transmembrane proteins (PstC and PstA) and a solute-binding protein (PstS).

The protein resides in the cell membrane. The enzyme catalyses phosphate(out) + ATP + H2O = ADP + 2 phosphate(in) + H(+). Functionally, part of the ABC transporter complex PstSACB involved in phosphate import. Responsible for energy coupling to the transport system. This is Phosphate import ATP-binding protein PstB 1 from Streptococcus thermophilus (strain CNRZ 1066).